A 207-amino-acid chain; its full sequence is Large ribosomal subunit protein uL4 (207 aa).

The tract at residues 44–71 (RRQGTQSAKTRAEVRGGGRKPWKQKGTG) is disordered. Positions 60-71 (GGRKPWKQKGTG) are enriched in basic residues.

The protein belongs to the universal ribosomal protein uL4 family. Part of the 50S ribosomal subunit.

In terms of biological role, one of the primary rRNA binding proteins, this protein initially binds near the 5'-end of the 23S rRNA. It is important during the early stages of 50S assembly. It makes multiple contacts with different domains of the 23S rRNA in the assembled 50S subunit and ribosome. Functionally, forms part of the polypeptide exit tunnel. This chain is Large ribosomal subunit protein uL4, found in Alkaliphilus oremlandii (strain OhILAs) (Clostridium oremlandii (strain OhILAs)).